Here is an 873-residue protein sequence, read N- to C-terminus: Zinc fingers and homeoboxes protein 1 (873 aa).

The tract at residues 1-63 is disordered; sequence MASRRKSTTP…ESVDSDNQQN (63 aa). Acidic residues predominate over residues 18–30; sequence QDPDLELISDLDE. A Phosphothreonine modification is found at Thr36. 3 positions are modified to phosphoserine: Ser45, Ser47, and Ser48. 2 consecutive C2H2-type zinc fingers follow at residues 70 to 93 and 102 to 125; these read YECK…DSEH and YVCV…LKYH. A Glycyl lysine isopeptide (Lys-Gly) (interchain with G-Cter in SUMO2) cross-link involves residue Lys159. Ser202 is modified (phosphoserine). Positions 202–236 are disordered; sequence SVEDVPEEKENEIKPDREEIVENPSSSASESNTST. The span at 212-221 shows a compositional bias: basic and acidic residues; that stretch reads NEIKPDREEI. Over residues 223-236 the composition is skewed to low complexity; sequence ENPSSSASESNTST. A required for dimerization region spans residues 272-432; sequence NSNLIPKVLI…QNNVQKSQVP (161 aa). The segment at 272–564 is required for interaction with NFYA; sequence NSNLIPKVLI…AQPKQSWNPF (293 aa). A DNA-binding region (homeobox 1) is located at residues 284-346; sequence NSIPTYNAAL…LKHGVSWTPE (63 aa). Residues Lys441, Lys454, Lys485, and Lys629 each participate in a glycyl lysine isopeptide (Lys-Gly) (interchain with G-Cter in SUMO2) cross-link. 2 consecutive DNA-binding regions (homeobox) follow at residues 464–526 and 569–630; these read SFGI…KSNQ and PQKF…EEKM. 2 disordered regions span residues 626-667 and 732-769; these read KEEK…ICKK and SSMN…INNW. The residue at position 648 (Ser648) is a Phosphoserine. A DNA-binding region (homeobox 4) is located at residues 660–722; that stretch reads STGKICKKTP…YAWKNGNLKW (63 aa). The interval 734–768 is required for nuclear localization; the sequence is MNGLSSLRKRGRGRPKGRGRGRPRGRPRGSKRINN. The segment covering 740 to 764 has biased composition (basic residues); sequence LRKRGRGRPKGRGRGRPRGRPRGSK. Ser774 bears the Phosphoserine mark. The homeobox 5 DNA-binding region spans 777-832; the sequence is KFKTGTAILKDYYLKHKFLNEQDLDELVNKSHMGYEQVREWFAERQRRSELGIELF. A disordered region spans residues 829-873; sequence IELFEENEEEDEVIDDQEEDEEETDDSDTWEPPRHVKRKLSKSDD. Positions 831-857 are enriched in acidic residues; that stretch reads LFEENEEEDEVIDDQEEDEEETDDSDT. A required for repressor activity region spans residues 831–873; it reads LFEENEEEDEVIDDQEEDEEETDDSDTWEPPRHVKRKLSKSDD. A compositionally biased stretch (basic residues) spans 863 to 873; that stretch reads HVKRKLSKSDD.

It belongs to the ZHX family. In terms of assembly, forms homodimers. Also forms heterodimers with ZHX3 which is a prerequisite for repressor activity and with ZHX2. Interacts with NFYA. Interacts with ATF7IP.

Its subcellular location is the nucleus. Its function is as follows. Acts as a transcriptional repressor. The sequence is that of Zinc fingers and homeoboxes protein 1 (ZHX1) from Gorilla gorilla gorilla (Western lowland gorilla).